The following is a 1270-amino-acid chain: DNA-directed RNA polymerase subunit beta (1270 aa).

Belongs to the RNA polymerase beta chain family. As to quaternary structure, the RNAP catalytic core consists of 2 alpha, 1 beta, 1 beta' and 1 omega subunit. When a sigma factor is associated with the core the holoenzyme is formed, which can initiate transcription.

It catalyses the reaction RNA(n) + a ribonucleoside 5'-triphosphate = RNA(n+1) + diphosphate. Its function is as follows. DNA-dependent RNA polymerase catalyzes the transcription of DNA into RNA using the four ribonucleoside triphosphates as substrates. The sequence is that of DNA-directed RNA polymerase subunit beta from Porphyromonas cangingivalis.